Here is a 114-residue protein sequence, read N- to C-terminus: DNA-directed RNA polymerases II, IV and V subunit 9B (114 aa).

Residues Cys7, Cys10, Cys29, Cys32, Cys76, Cys79, Cys103, and Cys108 each coordinate Zn(2+). The segment at 72–113 (KAVRCAKCQHGEAVFFQATARGEEGMTLFFVCCNPNCSHRWR) adopts a TFIIS-type zinc-finger fold.

Belongs to the archaeal RpoM/eukaryotic RPA12/RPB9/RPC11 RNA polymerase family. Component of the RNA polymerase II, IV and V complexes. Interacts with NRPD1.

The protein resides in the nucleus. It is found in the nucleolus. Its function is as follows. DNA-dependent RNA polymerase catalyzes the transcription of DNA into RNA using the four ribonucleoside triphosphates as substrates. Component of RNA polymerase II which synthesizes mRNA precursors and many functional non-coding RNAs. Pol II is the central component of the basal RNA polymerase II transcription machinery. It is composed of mobile elements that move relative to each other. Component of RNA polymerases IV and V which mediate short-interfering RNAs (siRNA) accumulation and subsequent RNA-directed DNA methylation-dependent (RdDM) transcriptional gene silencing (TGS) of endogenous repeated sequences, including transposable elements. Required for RNA silencing. The polypeptide is DNA-directed RNA polymerases II, IV and V subunit 9B (NRPB9B) (Arabidopsis thaliana (Mouse-ear cress)).